A 94-amino-acid polypeptide reads, in one-letter code: Large ribosomal subunit protein bL25 (94 aa).

The protein belongs to the bacterial ribosomal protein bL25 family. Part of the 50S ribosomal subunit; part of the 5S rRNA/L5/L18/L25 subcomplex. Contacts the 5S rRNA. Binds to the 5S rRNA independently of L5 and L18.

This is one of the proteins that binds to the 5S RNA in the ribosome where it forms part of the central protuberance. This Salmonella gallinarum (strain 287/91 / NCTC 13346) protein is Large ribosomal subunit protein bL25.